Here is a 305-residue protein sequence, read N- to C-terminus: Recombination-associated protein RdgC (305 aa).

Belongs to the RdgC family.

Its subcellular location is the cytoplasm. The protein resides in the nucleoid. Its function is as follows. May be involved in recombination. This is Recombination-associated protein RdgC from Sodalis glossinidius (strain morsitans).